The primary structure comprises 589 residues: Protein POF1B (589 aa).

The stretch at 334–443 forms a coiled coil; it reads TFSNIREELG…QNLRMQVSET (110 aa).

As to quaternary structure, interacts with nonmuscle actin.

The protein localises to the cell junction. The protein resides in the tight junction. Its function is as follows. Plays a key role in the organization of epithelial monolayers by regulating the actin cytoskeleton. May be involved in ovary development. This is Protein POF1B (POF1B) from Homo sapiens (Human).